A 129-amino-acid polypeptide reads, in one-letter code: uncharacterized protein (129 aa).

A helical transmembrane segment spans residues 46–66 (FFHFFFSFLLHLISPAVTGGI).

Its subcellular location is the membrane. This is an uncharacterized protein from Saccharomyces cerevisiae (strain ATCC 204508 / S288c) (Baker's yeast).